Here is a 499-residue protein sequence, read N- to C-terminus: Endosomal/lysosomal proton channel TMEM175 (499 aa).

The segment covering 1–10 has biased composition (polar residues); the sequence is MSRLQVQEQA. The disordered stretch occupies residues 1–26; the sequence is MSRLQVQEQAVDSEGDSSLYRRDEEG. Over 1 to 30 the chain is Cytoplasmic; the sequence is MSRLQVQEQAVDSEGDSSLYRRDEEGTQSS. The helical transmembrane segment at 31-53 threads the bilayer; that stretch reads HRMLGFSDALLSIIATVMILPVT. The RxxxFSD motif 1 signature appears at 32–38; it reads RMLGFSD. The Lumenal segment spans residues 54-74; that stretch reads HTEISPEQQFDKSIQKLLATR. The interval 55–60 is short helix H1-1; the sequence is TEISPE. The tract at residues 62–68 is short helix H2-1; it reads QFDKSIQ. Residues 75 to 97 traverse the membrane as a helical segment; it reads IAVYLMTFLIVTVAWAAHTRLFQ. Over 98 to 103 the chain is Cytoplasmic; sequence VVGKID. The chain crosses the membrane as a helical span at residues 104–125; the sequence is DTLALLNLACMMTITLLPYTFS. The Lumenal portion of the chain corresponds to 126–135; that stretch reads LMVTFPDVPL. A helical transmembrane segment spans residues 136–157; it reads GIFLFCMCVIAIGSVQAMIVGY. Residues 158–181 are Cytoplasmic-facing; that stretch reads AFHFPHLLNPQIQCSTHRALSRRH. The helical transmembrane segment at 182-202 threads the bilayer; sequence ILHLVLRGPALCFVAAVFSLF. The Lumenal portion of the chain corresponds to 203–207; that stretch reads FFPLS. The chain crosses the membrane as a helical span at residues 208-227; sequence YLLMVTVIFLPHISKATTWC. The Cytoplasmic portion of the chain corresponds to 228–254; it reads KDKFMGHRESPAHNVEPFSIDLHAPLS. The chain crosses the membrane as a helical span at residues 255 to 279; the sequence is KERVEAFSDGVYAIVATLLILDICE. A RxxxFSD motif 2 motif is present at residues 257-263; it reads RVEAFSD. Residues 280–306 are Lumenal-facing; that stretch reads DNVPDPKDVQQKFSGSLVAALGAYGPQ. Residues 285-293 form a short helix H1-2 region; it reads PKDVQQKFS. The tract at residues 295-301 is short helix H2-2; sequence SLVAALG. Residues 307 to 329 form a helical membrane-spanning segment; it reads FLAYFGSFATVGLLWFAHHSLFL. The Cytoplasmic segment spans residues 330–335; it reads HVRKAT. A helical membrane pass occupies residues 336–357; the sequence is QTMGLFNILSLAFVGGLPLAYQ. The Lumenal segment spans residues 358-372; it reads QTSAFARQPRDELER. A helical membrane pass occupies residues 373 to 393; the sequence is VRVSCAIIFFASIFQFAIWTT. The Cytoplasmic portion of the chain corresponds to 394–413; that stretch reads ALLHQRETLQPAVQFGGQEH. The chain crosses the membrane as a helical span at residues 414–437; that stretch reads AFMFAKLALYPCASLLAFAATCLL. Residues 438-439 lie on the Lumenal side of the membrane; sequence SR. Residues 440–466 traverse the membrane as a helical segment; it reads FSTAIFHLMQIAVPFAFLLLRLLVRLA. Residues 467–499 lie on the Cytoplasmic side of the membrane; that stretch reads LAGLQVLWDLWPERPQQDQGEPETQSQLLPASC.

Belongs to the TMEM175 family. In terms of assembly, homodimer. Interacts with AKT (AKT1, AKT2 or AKT3); leading to formation of the lysoK(GF) complex, which activates the channel. Interacts with LAMP1; inhibiting the proton channel activity of TMEM175. Interacts with LAMP2; inhibiting the proton channel activity of TMEM175.

Its subcellular location is the endosome membrane. The protein localises to the lysosome membrane. The enzyme catalyses H(+)(in) = H(+)(out). The catalysed reaction is K(+)(in) = K(+)(out). With respect to regulation, active at low pH (under pH 4.6): proton channel activity is activated by luminal side protons. Polyunsaturated fatty acids, such as arachidonic acid, also activate the channel activity. Proton channel activity is directly inhibited by LAMP1 or LAMP2, facilitating lysosomal acidification. Channel activity is activated following interaction with AKT (AKT1, AKT2 or AKT3): interaction promotes activation from closed to an open state. Activation by AKT is independent of AKT serine/threonine-protein kinase activity. Proton-activated proton channel that catalyzes proton efflux from endosomes and lysosomes to maintain a steady-state pH. Activated at low pH (under pH 4.6) by luminal side protons: selectively mediates lysosomal proton release from lysosomes, eliciting a proton leak that balances V-ATPase activity to maintain pH homeostasis. Regulation of lumenal pH stability is required for autophagosome-lysosome fusion. Also acts as a potassium channel at higher pH, regulating potassium conductance in endosomes and lysosomes. Constitutes the pore-forming subunit of the lysoK(GF) complex, a complex activated by extracellular growth factors. The lysoK(GF) complex is composed of TMEM175 and AKT (AKT1, AKT2 or AKT3), a major target of growth factor receptors: in the complex, TMEM175 channel is opened by conformational changes by AKT, leading to its activation. The lysoK(GF) complex is required to protect neurons against stress-induced damage. This chain is Endosomal/lysosomal proton channel TMEM175, found in Rattus norvegicus (Rat).